The sequence spans 102 residues: Large ribosomal subunit protein bL21 (102 aa).

This sequence belongs to the bacterial ribosomal protein bL21 family. In terms of assembly, part of the 50S ribosomal subunit. Contacts protein L20.

Its function is as follows. This protein binds to 23S rRNA in the presence of protein L20. The sequence is that of Large ribosomal subunit protein bL21 from Campylobacter hominis (strain ATCC BAA-381 / DSM 21671 / CCUG 45161 / LMG 19568 / NCTC 13146 / CH001A).